The chain runs to 814 residues: Rap guanine nucleotide exchange factor 5 (814 aa).

A DEP domain is found at 43–118 (LQAADLVKDR…DNYVFYQFSS (76 aa)). The region spanning 301–434 (ARYVVVSGTP…ELKEFQKILG (134 aa)) is the N-terminal Ras-GEF domain. The region spanning 578-813 (NTWDLALELM…FELSHRLEPR (236 aa)) is the Ras-GEF domain.

It localises to the nucleus. Functionally, guanine nucleotide exchange factor (GEF) for RAP1A, RAP2A and MRAS/M-Ras-GTP. Its association with MRAS inhibits Rap1 activation. This Mus musculus (Mouse) protein is Rap guanine nucleotide exchange factor 5 (Rapgef5).